Consider the following 203-residue polypeptide: Glycerol-3-phosphate acyltransferase (203 aa).

6 consecutive transmembrane segments (helical) span residues 3-23 (ILLA…VVVS), 51-71 (KAAI…VWLV), 74-94 (FGIG…LGHL), 116-136 (AVHP…AFFF), 140-160 (SLAA…LFGT), and 164-178 (PVAW…LLIW).

Belongs to the PlsY family. Probably interacts with PlsX.

It is found in the cell inner membrane. It catalyses the reaction an acyl phosphate + sn-glycerol 3-phosphate = a 1-acyl-sn-glycero-3-phosphate + phosphate. It participates in lipid metabolism; phospholipid metabolism. In terms of biological role, catalyzes the transfer of an acyl group from acyl-phosphate (acyl-PO(4)) to glycerol-3-phosphate (G3P) to form lysophosphatidic acid (LPA). This enzyme utilizes acyl-phosphate as fatty acyl donor, but not acyl-CoA or acyl-ACP. The chain is Glycerol-3-phosphate acyltransferase from Burkholderia pseudomallei (strain K96243).